Consider the following 67-residue polypeptide: Large ribosomal subunit protein bL35 (67 aa).

This sequence belongs to the bacterial ribosomal protein bL35 family.

This Allorhizobium ampelinum (strain ATCC BAA-846 / DSM 112012 / S4) (Agrobacterium vitis (strain S4)) protein is Large ribosomal subunit protein bL35.